The sequence spans 337 residues: Cathepsin L-like (337 aa).

The first 18 residues, 1–18 (MNRFILLALVAAVVAVNS), serve as a signal peptide directing secretion. The propeptide at 19–119 (AKLSRQIESA…SSFLAPFNVQ (101 aa)) is activation peptide. A glycan (N-linked (GlcNAc...) asparagine) is linked at N108. Disulfide bonds link C141–C184, C175–C217, and C276–C326. C144 is an active-site residue. Active-site residues include H283 and N304.

This sequence belongs to the peptidase C1 family. In terms of tissue distribution, expressed in intestine, pharynx posterior bulb, hypodermis and cuticle (at protein level). Expressed in germ cells, developing oocytes, sheath cells surrounding germ cells and oocytes, and in the eggshell (at protein level).

The protein resides in the secreted. The protein localises to the cytoplasmic granule. It localises to the lysosome. Its subcellular location is the endosome. It is found in the cytoplasmic vesicle. The protein resides in the phagosome. It catalyses the reaction Specificity close to that of papain. As compared to cathepsin B, cathepsin L exhibits higher activity toward protein substrates, but has little activity on Z-Arg-Arg-NHMec, and no peptidyl-dipeptidase activity.. In terms of biological role, cysteine protease which plays an essential role in the degradation of proteins in lysosomes. During early embryogenesis, maternally required for the proteolytic processing of yolk proteins in platelets, a lysosome-like structure where a slow and controlled degradation of yolk proteins occurs. In the gonad, required for the clearance of apoptotic germ cells in the engulfing cell phagolysosomes. In embryos, required for the degradation of endocytic and autophagic cargos. In embryos, may play a role in the degradation of lipid-containing droplets. Required for larval development. The polypeptide is Cathepsin L-like (Caenorhabditis elegans).